The following is a 108-amino-acid chain: uncharacterized protein (108 aa).

3 helical membrane-spanning segments follow: residues leucine 36–isoleucine 56, phenylalanine 58–phenylalanine 78, and isoleucine 88–leucine 108.

Its subcellular location is the cell membrane. This is an uncharacterized protein from Alkalihalophilus pseudofirmus (strain ATCC BAA-2126 / JCM 17055 / OF4) (Bacillus pseudofirmus).